A 247-amino-acid polypeptide reads, in one-letter code: Probable transcriptional regulatory protein BHWA1_01533 (247 aa).

Residues 1–22 (MSGHSKWASIKHKKAANDSKKG) form a disordered region.

The protein belongs to the TACO1 family.

The protein localises to the cytoplasm. This is Probable transcriptional regulatory protein BHWA1_01533 from Brachyspira hyodysenteriae (strain ATCC 49526 / WA1).